A 185-amino-acid chain; its full sequence is Coordinator of PRMT5 and differentiation stimulator (185 aa).

Residue Met-1 is modified to N-acetylmethionine. Positions 1–109 are disordered; sequence MDPPTAGAQS…MSGCLPKEQA (109 aa). 2 stretches are compositionally biased toward basic and acidic residues: residues 42 to 52 and 66 to 77; these read SSQEKATENAT and SPAHGEGTHCEE. A Phosphoserine modification is found at Ser-66. The segment covering 78–89 has biased composition (acidic residues); sequence EGFAEDDEDSDG.

In terms of assembly, interacts with PRMT5. Interacts with histone H4; specifically interacts with the N-terminus of histone H4 but not with histone H3. Interacts with CBFB. Found in a complex with PRMT5, RUNX1 and CBFB.

Its subcellular location is the nucleus. Its function is as follows. Histone-binding protein required for histone H4 methyltransferase activity of PRMT5. Specifically required for histone H4 'Arg-3' methylation mediated by PRMT5, but not histone H3 'Arg-8' methylation, suggesting that it modulates the substrate specificity of PRMT5. Specifically interacts with the N-terminus of histone H4 but not with histone H3, suggesting that it acts by promoting the association between histone H4 and PRMT5. Involved in CCNE1 promoter repression. Plays a role in muscle cell differentiation by modulating the recruitment of PRMT5 to the promoter of genes involved in the coordination between cell cycle exit and muscle differentiation. In Bos taurus (Bovine), this protein is Coordinator of PRMT5 and differentiation stimulator (COPRS).